Here is a 123-residue protein sequence, read N- to C-terminus: Large ribosomal subunit protein bL12 (123 aa).

It belongs to the bacterial ribosomal protein bL12 family. As to quaternary structure, homodimer. Part of the ribosomal stalk of the 50S ribosomal subunit. Forms a multimeric L10(L12)X complex, where L10 forms an elongated spine to which 2 to 4 L12 dimers bind in a sequential fashion. Binds GTP-bound translation factors.

Functionally, forms part of the ribosomal stalk which helps the ribosome interact with GTP-bound translation factors. Is thus essential for accurate translation. The chain is Large ribosomal subunit protein bL12 from Bartonella bacilliformis (strain ATCC 35685 / KC583 / Herrer 020/F12,63).